We begin with the raw amino-acid sequence, 1036 residues long: Isoleucine--tRNA ligase (1036 aa).

A 'HIGH' region motif is present at residues 46-56 (PFATGLPHYGH). The short motif at 589-593 (KMSKR) is the 'KMSKS' region element. Lysine 592 serves as a coordination point for ATP.

This sequence belongs to the class-I aminoacyl-tRNA synthetase family. IleS type 2 subfamily. As to quaternary structure, monomer. Requires Zn(2+) as cofactor.

It localises to the cytoplasm. The enzyme catalyses tRNA(Ile) + L-isoleucine + ATP = L-isoleucyl-tRNA(Ile) + AMP + diphosphate. In terms of biological role, catalyzes the attachment of isoleucine to tRNA(Ile). As IleRS can inadvertently accommodate and process structurally similar amino acids such as valine, to avoid such errors it has two additional distinct tRNA(Ile)-dependent editing activities. One activity is designated as 'pretransfer' editing and involves the hydrolysis of activated Val-AMP. The other activity is designated 'posttransfer' editing and involves deacylation of mischarged Val-tRNA(Ile). This Chlamydia trachomatis serovar D (strain ATCC VR-885 / DSM 19411 / UW-3/Cx) protein is Isoleucine--tRNA ligase.